Reading from the N-terminus, the 161-residue chain is Aklanonic acid methyl ester cyclase DauD (161 aa).

Position 106 (Gln-106) interacts with substrate. Positions 137 to 161 are disordered; it reads WPTPEGWRPCPPPPRRRHDRSTDTP.

Belongs to the polyketide cyclase DnrD family. As to quaternary structure, homotetramer.

It carries out the reaction methyl aklanonate = aklaviketone. It participates in antibiotic biosynthesis; daunorubicin biosynthesis. It functions in the pathway antibiotic biosynthesis; carminomycin biosynthesis. Its pathway is antibiotic biosynthesis; rhodomycin biosynthesis. The protein operates within antibiotic biosynthesis; aclacinomycin biosynthesis. Involved in the biosynthesis of aklavinone which is an important precursor common to the formation of the clinically significant anthracyclines such as carminomycin, daunorubicin (daunomycin), rhodomycin, aclacinomycin T (aklavin) and aclacinomycin A (aclarubicin). These compounds are aromatic polyketide antibiotics that exhibit high cytotoxicity and are widely applied in the chemotherapy of a variety of cancers. Catalyzes the cyclization of aklanonic acid methyl ester to yield aklaviketone. This is Aklanonic acid methyl ester cyclase DauD (dauD) from Streptomyces sp. (strain C5).